Reading from the N-terminus, the 441-residue chain is Proline--tRNA ligase (441 aa).

This sequence belongs to the class-II aminoacyl-tRNA synthetase family. ProS type 2 subfamily. Homodimer.

The protein resides in the cytoplasm. It carries out the reaction tRNA(Pro) + L-proline + ATP = L-prolyl-tRNA(Pro) + AMP + diphosphate. Functionally, catalyzes the attachment of proline to tRNA(Pro) in a two-step reaction: proline is first activated by ATP to form Pro-AMP and then transferred to the acceptor end of tRNA(Pro). This is Proline--tRNA ligase from Bartonella henselae (strain ATCC 49882 / DSM 28221 / CCUG 30454 / Houston 1) (Rochalimaea henselae).